Here is a 247-residue protein sequence, read N- to C-terminus: Small ribosomal subunit protein uS2 (247 aa).

Belongs to the universal ribosomal protein uS2 family.

The sequence is that of Small ribosomal subunit protein uS2 from Cupriavidus metallidurans (strain ATCC 43123 / DSM 2839 / NBRC 102507 / CH34) (Ralstonia metallidurans).